Here is a 532-residue protein sequence, read N- to C-terminus: Cocaine esterase (532 aa).

Glutamine 1 carries the post-translational modification Pyrrolidone carboxylic acid. A disulfide bridge links cysteine 69 with cysteine 96. Serine 201 (acyl-ester intermediate) is an active-site residue. Asparagine 249 carries N-linked (GlcNAc...) asparagine glycosylation. Cysteines 253 and 264 form a disulfide. Catalysis depends on charge relay system residues glutamate 318 and histidine 430. The short motif at 529–532 (HTEL) is the Prevents secretion from ER element.

Belongs to the type-B carboxylesterase/lipase family. As to quaternary structure, monomer.

It is found in the endoplasmic reticulum lumen. The catalysed reaction is a carboxylic ester + H2O = an alcohol + a carboxylate + H(+). It carries out the reaction cocaine + H2O = ecgonine methyl ester + benzoate + H(+). The enzyme catalyses 2-(5Z,8Z,11Z,14Z-eicosatetraenoyl)-glycerol + H2O = glycerol + (5Z,8Z,11Z,14Z)-eicosatetraenoate + H(+). It catalyses the reaction prostaglandin E2 1-glyceryl ester + H2O = prostaglandin E2 + glycerol + H(+). The catalysed reaction is prostaglandin F2alpha 1-glyceryl ester + H2O = prostaglandin F2alpha + glycerol + H(+). In terms of biological role, involved in the detoxification of xenobiotics and in the activation of ester and amide prodrugs. Converts monoacylglycerides to free fatty acids and glycerol. Hydrolyzes of 2-arachidonoylglycerol and prostaglandins. The sequence is that of Cocaine esterase (CES2) from Oryctolagus cuniculus (Rabbit).